The chain runs to 218 residues: Thiamine-phosphate synthase (218 aa).

Residues 45-49 and Asn77 each bind 4-amino-2-methyl-5-(diphosphooxymethyl)pyrimidine; that span reads QYREK. Residues Asp78 and Asp97 each coordinate Mg(2+). A 4-amino-2-methyl-5-(diphosphooxymethyl)pyrimidine-binding site is contributed by Ser116. 142–144 is a 2-[(2R,5Z)-2-carboxy-4-methylthiazol-5(2H)-ylidene]ethyl phosphate binding site; the sequence is TKT. Residue Lys145 coordinates 4-amino-2-methyl-5-(diphosphooxymethyl)pyrimidine. Residues Gly173 and 193–194 contribute to the 2-[(2R,5Z)-2-carboxy-4-methylthiazol-5(2H)-ylidene]ethyl phosphate site; that span reads VT.

Belongs to the thiamine-phosphate synthase family. Mg(2+) serves as cofactor.

The catalysed reaction is 2-[(2R,5Z)-2-carboxy-4-methylthiazol-5(2H)-ylidene]ethyl phosphate + 4-amino-2-methyl-5-(diphosphooxymethyl)pyrimidine + 2 H(+) = thiamine phosphate + CO2 + diphosphate. It carries out the reaction 2-(2-carboxy-4-methylthiazol-5-yl)ethyl phosphate + 4-amino-2-methyl-5-(diphosphooxymethyl)pyrimidine + 2 H(+) = thiamine phosphate + CO2 + diphosphate. The enzyme catalyses 4-methyl-5-(2-phosphooxyethyl)-thiazole + 4-amino-2-methyl-5-(diphosphooxymethyl)pyrimidine + H(+) = thiamine phosphate + diphosphate. It participates in cofactor biosynthesis; thiamine diphosphate biosynthesis; thiamine phosphate from 4-amino-2-methyl-5-diphosphomethylpyrimidine and 4-methyl-5-(2-phosphoethyl)-thiazole: step 1/1. In terms of biological role, condenses 4-methyl-5-(beta-hydroxyethyl)thiazole monophosphate (THZ-P) and 2-methyl-4-amino-5-hydroxymethyl pyrimidine pyrophosphate (HMP-PP) to form thiamine monophosphate (TMP). This is Thiamine-phosphate synthase from Pelotomaculum thermopropionicum (strain DSM 13744 / JCM 10971 / SI).